A 267-amino-acid polypeptide reads, in one-letter code: Kallikrein-14 (267 aa).

The N-terminal stretch at 1–34 is a signal peptide; sequence MSLRVLGSGTWPSAPKMFLLLTALQVLAIAMTQS. A propeptide spans 35–40 (activation peptide); that stretch reads QEDENK. Residues 41–265 form the Peptidase S1 domain; that stretch reads IIGGHTCTRS…YRSWIEETMR (225 aa). 5 disulfides stabilise this stretch: Cys47–Cys180, Cys68–Cys84, Cys159–Cys226, Cys191–Cys205, and Cys216–Cys241. Catalysis depends on charge relay system residues His83 and Asp127. Residue Ser220 is the Charge relay system of the active site.

The protein belongs to the peptidase S1 family. Kallikrein subfamily. In terms of processing, proteolytic cleavage of the activation peptide produces the active enzyme. Highly expressed in CNS, bone marrow and fetal liver. Also expressed in breast, thyroid, kidney, colon, pancreas, spleen, prostate, uterus, small intestine, placenta and skeletal muscle. Among 40 tissues tested, the highest expression is detected in skin followed by breast and prostate (at protein level). Expressed in stratum corneum by sweat ducts and sweat glands and detected in sweat (at protein level).

It localises to the secreted. The protein localises to the extracellular space. Its activity is regulated as follows. Inhibited by SERPINA1, SERPINC1, SERPINE1, SERPINF2, aprotinin, soybean, trypsin inhibitor and leupeptin. Inhibited by serine protease inhibitor SPINK5. Has an autoproteolytic activity which may have a regulatory effect. Activated by citrate and inhibited by zinc and to a lower extent by manganese. Serine-type endopeptidase with a dual trypsin-like and chymotrypsin-like substrate specificity. May activate/inactivate the proteinase-activated receptors F2R, F2RL1 and F2RL3 and other kallikreins including KLK1, KLK3, KLK5 and KLK11. May function in seminal clot liquefaction through direct cleavage of the semenogelin SEMG1 and SEMG2 and activation of KLK3. May function through desmoglein DSG1 cleavage in epidermal desquamation a process by which the most superficial corneocytes are shed from the skin surface. May be involved in several aspects of tumor progression including growth, invasion and angiogenesis. In Homo sapiens (Human), this protein is Kallikrein-14 (KLK14).